We begin with the raw amino-acid sequence, 340 residues long: Glycerol-3-phosphate dehydrogenase [NAD(P)+] (340 aa).

Positions 14, 15, 35, and 109 each coordinate NADPH. K109 and G137 together coordinate sn-glycerol 3-phosphate. A141 lines the NADPH pocket. 5 residues coordinate sn-glycerol 3-phosphate: K192, D245, S255, R256, and N257. Catalysis depends on K192, which acts as the Proton acceptor. R256 lines the NADPH pocket. 2 residues coordinate NADPH: V280 and E282.

The protein belongs to the NAD-dependent glycerol-3-phosphate dehydrogenase family.

It localises to the cytoplasm. It carries out the reaction sn-glycerol 3-phosphate + NAD(+) = dihydroxyacetone phosphate + NADH + H(+). It catalyses the reaction sn-glycerol 3-phosphate + NADP(+) = dihydroxyacetone phosphate + NADPH + H(+). The protein operates within membrane lipid metabolism; glycerophospholipid metabolism. In terms of biological role, catalyzes the reduction of the glycolytic intermediate dihydroxyacetone phosphate (DHAP) to sn-glycerol 3-phosphate (G3P), the key precursor for phospholipid synthesis. This is Glycerol-3-phosphate dehydrogenase [NAD(P)+] from Teredinibacter turnerae (strain ATCC 39867 / T7901).